The following is a 356-amino-acid chain: Protein translocase subunit SecY (356 aa).

Transmembrane regions (helical) follow at residues 24 to 44 (LFVI…IPGI), 77 to 97 (IFAL…LLTV), 125 to 145 (LVLA…MPGM), 154 to 174 (FAFY…LMWL), 183 to 203 (IGNG…PPAV), 217 to 237 (FLLL…VVFI), 274 to 294 (VIPA…ASWF), and 317 to 337 (YVLL…ALVF).

It belongs to the SecY/SEC61-alpha family. As to quaternary structure, component of the Sec protein translocase complex. Heterotrimer consisting of SecY, SecE and SecG subunits. The heterotrimers can form oligomers, although 1 heterotrimer is thought to be able to translocate proteins. Interacts with the ribosome. Interacts with SecDF, and other proteins may be involved. Interacts with SecA.

The protein resides in the cell membrane. Its function is as follows. The central subunit of the protein translocation channel SecYEG. Consists of two halves formed by TMs 1-5 and 6-10. These two domains form a lateral gate at the front which open onto the bilayer between TMs 2 and 7, and are clamped together by SecE at the back. The channel is closed by both a pore ring composed of hydrophobic SecY resides and a short helix (helix 2A) on the extracellular side of the membrane which forms a plug. The plug probably moves laterally to allow the channel to open. The ring and the pore may move independently. The sequence is that of Protein translocase subunit SecY from Buchnera aphidicola subsp. Acyrthosiphon kondoi (Acyrthosiphon kondoi symbiotic bacterium).